The chain runs to 499 residues: MDKLQRDGKEDTSRQRRFLYPLLFQEDFYTIAYDHCSNRSSSFEPMGNSSSNDRFSFLTVKRSISRIRQQNGSIVPFVNCDQNKLVGHNKSFYSELVLGGLTAVSEVPFSIRSKHSLEGMNEWASFRSINSIFPLMEDKIPHSNFILDIRIPHLTHPEILVRTFRRWIQDAPFLHSLRSVLHEHRNLIISSNLDQLILIASKKNTRLSLFLWNYYAYECESLLVPLWKRFSHSRSLPYESFIERTPFYRKIEHIVIFYHKYLKKSLWFLKDPSIHYVKYRERSIIALRGTYLLVKKWRYHLTNFWQCHFHLWLQPYRIYIDELSNNCFSFLGYLLSVKMKTSVVRIKMLDDSFITDLITKEFDPIAPTTLLIGSLVKEKFCDISGHPFSRLAWTGLTDDDILDRFDRIWRNIFHYHSGSSKKDGLYRMKYILRLPCAKTLACKHKSAIRAVRERFGSELFTKSFPKERESIFLSFSKTRSQRERIWYSDIIQRNPFVNS.

This sequence belongs to the intron maturase 2 family. MatK subfamily.

The protein localises to the plastid. It localises to the chloroplast. In terms of biological role, usually encoded in the trnK tRNA gene intron. Probably assists in splicing its own and other chloroplast group II introns. The polypeptide is Maturase K (Macrozamia communis (Burrawang palm)).